We begin with the raw amino-acid sequence, 100 residues long: Aspartyl/glutamyl-tRNA(Asn/Gln) amidotransferase subunit C (100 aa).

It belongs to the GatC family. Heterotrimer of A, B and C subunits.

The catalysed reaction is L-glutamyl-tRNA(Gln) + L-glutamine + ATP + H2O = L-glutaminyl-tRNA(Gln) + L-glutamate + ADP + phosphate + H(+). The enzyme catalyses L-aspartyl-tRNA(Asn) + L-glutamine + ATP + H2O = L-asparaginyl-tRNA(Asn) + L-glutamate + ADP + phosphate + 2 H(+). In terms of biological role, allows the formation of correctly charged Asn-tRNA(Asn) or Gln-tRNA(Gln) through the transamidation of misacylated Asp-tRNA(Asn) or Glu-tRNA(Gln) in organisms which lack either or both of asparaginyl-tRNA or glutaminyl-tRNA synthetases. The reaction takes place in the presence of glutamine and ATP through an activated phospho-Asp-tRNA(Asn) or phospho-Glu-tRNA(Gln). In Streptococcus agalactiae serotype Ia (strain ATCC 27591 / A909 / CDC SS700), this protein is Aspartyl/glutamyl-tRNA(Asn/Gln) amidotransferase subunit C.